The primary structure comprises 514 residues: Peptide chain release factor 3 (514 aa).

Residues 8 to 268 (KKRRTFAIIS…IFLKFAPEPH (261 aa)) form the tr-type G domain. Residues 17 to 24 (SHPDAGKT), 85 to 89 (DTPGH), and 139 to 142 (NKLD) contribute to the GTP site.

It belongs to the TRAFAC class translation factor GTPase superfamily. Classic translation factor GTPase family. PrfC subfamily.

Its subcellular location is the cytoplasm. Functionally, increases the formation of ribosomal termination complexes and stimulates activities of RF-1 and RF-2. It binds guanine nucleotides and has strong preference for UGA stop codons. It may interact directly with the ribosome. The stimulation of RF-1 and RF-2 is significantly reduced by GTP and GDP, but not by GMP. The polypeptide is Peptide chain release factor 3 (Streptococcus pneumoniae (strain 70585)).